Reading from the N-terminus, the 332-residue chain is Aspartate carbamoyltransferase catalytic subunit (332 aa).

The tract at residues 1–20 is disordered; that stretch reads MPNTHDTKNNVSPSEYAKFD. Arg72 and Thr73 together coordinate carbamoyl phosphate. Lys100 is a binding site for L-aspartate. Residues Arg122, His152, and Gln155 each contribute to the carbamoyl phosphate site. L-aspartate-binding residues include Arg186 and Arg241. Carbamoyl phosphate is bound by residues Gly282 and Pro283.

This sequence belongs to the aspartate/ornithine carbamoyltransferase superfamily. ATCase family. In terms of assembly, heterododecamer (2C3:3R2) of six catalytic PyrB chains organized as two trimers (C3), and six regulatory PyrI chains organized as three dimers (R2).

The catalysed reaction is carbamoyl phosphate + L-aspartate = N-carbamoyl-L-aspartate + phosphate + H(+). The protein operates within pyrimidine metabolism; UMP biosynthesis via de novo pathway; (S)-dihydroorotate from bicarbonate: step 2/3. Catalyzes the condensation of carbamoyl phosphate and aspartate to form carbamoyl aspartate and inorganic phosphate, the committed step in the de novo pyrimidine nucleotide biosynthesis pathway. The chain is Aspartate carbamoyltransferase catalytic subunit from Psychrobacter sp. (strain TAD1).